Here is a 210-residue protein sequence, read N- to C-terminus: Imidazoleglycerol-phosphate dehydratase (210 aa).

This sequence belongs to the imidazoleglycerol-phosphate dehydratase family.

Its subcellular location is the cytoplasm. It carries out the reaction D-erythro-1-(imidazol-4-yl)glycerol 3-phosphate = 3-(imidazol-4-yl)-2-oxopropyl phosphate + H2O. Its pathway is amino-acid biosynthesis; L-histidine biosynthesis; L-histidine from 5-phospho-alpha-D-ribose 1-diphosphate: step 6/9. The polypeptide is Imidazoleglycerol-phosphate dehydratase (Mycobacterium leprae (strain Br4923)).